We begin with the raw amino-acid sequence, 390 residues long: tRNA-specific 2-thiouridylase MnmA (390 aa).

ATP-binding positions include 36-43 (GMSGGVDS) and Met-62. An interaction with target base in tRNA region spans residues 122-124 (NPD). The active-site Nucleophile is the Cys-127. A disulfide bridge connects residues Cys-127 and Cys-223. Gly-151 provides a ligand contact to ATP. Residues 173-175 (KDQ) are interaction with tRNA. Residue Cys-223 is the Cysteine persulfide intermediate of the active site. Residues 335 to 336 (RY) form an interaction with tRNA region.

This sequence belongs to the MnmA/TRMU family.

It localises to the cytoplasm. It carries out the reaction S-sulfanyl-L-cysteinyl-[protein] + uridine(34) in tRNA + AH2 + ATP = 2-thiouridine(34) in tRNA + L-cysteinyl-[protein] + A + AMP + diphosphate + H(+). Catalyzes the 2-thiolation of uridine at the wobble position (U34) of tRNA, leading to the formation of s(2)U34. This is tRNA-specific 2-thiouridylase MnmA from Marinomonas sp. (strain MWYL1).